A 673-amino-acid chain; its full sequence is Probable multidrug resistance ABC transporter ATP-binding/permease protein YheH (673 aa).

5 helical membrane-spanning segments follow: residues 18-38 (LITA…GPFI), 146-166 (IKGM…SVFF), 223-243 (LYVT…GIFT), 245-265 (LFLL…IIWL), and 347-367 (LAFV…AGIV). An ABC transmembrane type-1 domain is found at 18–398 (LITAVLLLTV…IVNQFSKLEL (381 aa)). The ABC transporter domain maps to 430–664 (VEFRDVSFAY…EGQYYQMYEL (235 aa)). 463 to 470 (GHTGSGKS) is an ATP binding site.

Belongs to the ABC transporter superfamily. In terms of assembly, heterodimer composed of YheH and YheI.

The protein localises to the cell membrane. With respect to regulation, inhibited by ortho-vanadate. Involved in the transport of four structurally unrelated drugs, including doxorubicin and mitoxantrone. Transmembrane domains (TMD) form a pore in the membrane and the ATP-binding domain (NBD) is responsible for energy generation. This is Probable multidrug resistance ABC transporter ATP-binding/permease protein YheH (yheH) from Bacillus subtilis (strain 168).